A 325-amino-acid chain; its full sequence is Beta-ketoacyl-[acyl-carrier-protein] synthase III (325 aa).

Residues cysteine 119 and histidine 252 contribute to the active site. The segment at 253–257 (QANIR) is ACP-binding. Asparagine 282 is an active-site residue.

Belongs to the thiolase-like superfamily. FabH family. In terms of assembly, homodimer.

The protein localises to the cytoplasm. It carries out the reaction malonyl-[ACP] + acetyl-CoA + H(+) = 3-oxobutanoyl-[ACP] + CO2 + CoA. Its pathway is lipid metabolism; fatty acid biosynthesis. Its function is as follows. Catalyzes the condensation reaction of fatty acid synthesis by the addition to an acyl acceptor of two carbons from malonyl-ACP. Catalyzes the first condensation reaction which initiates fatty acid synthesis and may therefore play a role in governing the total rate of fatty acid production. Possesses both acetoacetyl-ACP synthase and acetyl transacylase activities. Its substrate specificity determines the biosynthesis of branched-chain and/or straight-chain of fatty acids. This is Beta-ketoacyl-[acyl-carrier-protein] synthase III from Verminephrobacter eiseniae (strain EF01-2).